The following is an 805-amino-acid chain: Putative cation-transporting ATPase MJ1226 (805 aa).

The next 4 membrane-spanning stretches (helical) occupy residues 53–73, 75–95, 226–246, and 258–278; these read SYFW…SAII, HWVD…VGFW, IGDY…AVEL, and FALV…LSIT. The active-site 4-aspartylphosphate intermediate is Asp311. Helical transmembrane passes span 615–637, 641–663, 680–700, 712–734, 747–769, and 773–790; these read YVIY…ILIL, PITA…AIAY, ILML…LIFY, ELQS…VTRI, LLFW…GIFM, and GWDL…WMLI.

It belongs to the cation transport ATPase (P-type) (TC 3.A.3) family. Type IIIA subfamily.

The protein localises to the cell membrane. The enzyme catalyses ATP + H2O = ADP + phosphate + H(+). The protein is Putative cation-transporting ATPase MJ1226 of Methanocaldococcus jannaschii (strain ATCC 43067 / DSM 2661 / JAL-1 / JCM 10045 / NBRC 100440) (Methanococcus jannaschii).